A 297-amino-acid polypeptide reads, in one-letter code: 32 kDa beta-galactoside-binding lectin lec-3 (297 aa).

2 consecutive Galectin domains span residues 11–142 (YRSK…VQWG) and 151–290 (ESGI…IQVV). 224–230 (WGNEERE) contacts a beta-D-galactoside.

In terms of biological role, binds galactose. The protein is 32 kDa beta-galactoside-binding lectin lec-3 (lec-3) of Caenorhabditis elegans.